The chain runs to 606 residues: Polyphenol oxidase A1, chloroplastic (606 aa).

Residues 1–92 (MTSISALSFI…TLATNPSALA (92 aa)) constitute a chloroplast transit peptide. The interval 32 to 63 (KQHQSSKLRKPKRQVTCSSNNNQNNPKEEQEL) is disordered. Residues 35–44 (QSSKLRKPKR) show a composition bias toward basic residues. Disulfide bonds link Cys-103–Cys-121 and Cys-120–Cys-182. 6 residues coordinate Cu cation: His-181, His-202, His-211, His-333, His-337, and His-367. Positions 185–202 (CDGAYSQIGFPDLKLQVH) form a cross-link, 2'-(S-cysteinyl)-histidine (Cys-His).

This sequence belongs to the tyrosinase family. Cu(2+) is required as a cofactor.

The protein resides in the plastid. It localises to the chloroplast thylakoid lumen. It carries out the reaction 2 catechol + O2 = 2 1,2-benzoquinone + 2 H2O. Its function is as follows. Catalyzes the oxidation of mono- and o-diphenols to o-diquinones. The polypeptide is Polyphenol oxidase A1, chloroplastic (Vicia faba (Broad bean)).